Reading from the N-terminus, the 514-residue chain is Beta-glucosidase 21 (514 aa).

Positions 1 to 25 are cleaved as a signal peptide; the sequence is MERPLHLLLVFLSSPWLLLLQGVSS. 2 residues coordinate a beta-D-glucoside: glutamine 47 and histidine 147. Glutamate 193 functions as the Proton donor in the catalytic mechanism. A disulfide bond links cysteine 212 and cysteine 220. Residues asparagine 219 and asparagine 224 are each glycosylated (N-linked (GlcNAc...) asparagine). Residues tyrosine 336 and glutamate 406 each coordinate a beta-D-glucoside. Residue glutamate 406 is the Nucleophile of the active site. The N-linked (GlcNAc...) asparagine glycan is linked to asparagine 407. A beta-D-glucoside is bound by residues tryptophan 448 and phenylalanine 465. The N-linked (GlcNAc...) asparagine glycan is linked to asparagine 494.

This sequence belongs to the glycosyl hydrolase 1 family.

It carries out the reaction Hydrolysis of terminal, non-reducing beta-D-glucosyl residues with release of beta-D-glucose.. The protein is Beta-glucosidase 21 (BGLU21) of Oryza sativa subsp. japonica (Rice).